The primary structure comprises 232 residues: MPFIFRYSFFNKALIFWYTILMKIYKTINHIAGENTYYLVNDQAVILIDPGSNGQEIISKIKSFEKPLVAILLTHTHYDHIFSLDLVRDAFDHPPVYVSEKEAAWLSSPDDNLSGLGRHDDIINVIARPAENFFKLKQPYQLNGFEFTVLPTPGHSWGGVSFVFHSDELVVTGDALFRETIGRTDLPTSNFEDLITGIRQELFTLPNHYRVYPGHGPSTTICHEKNANPFFH.

Zn(2+) is bound by residues His-75, His-77, Asp-79, His-80, His-155, Asp-174, and His-215.

It depends on Zn(2+) as a cofactor.

In Streptococcus pyogenes serotype M6 (strain ATCC BAA-946 / MGAS10394), this protein is Probable metallo-hydrolase M6_Spy0554.